Here is a 198-residue protein sequence, read N- to C-terminus: Na(+)-translocating NADH-quinone reductase subunit E (198 aa).

The next 6 membrane-spanning stretches (helical) occupy residues 11–31, 35–55, 77–97, 109–129, 140–160, and 176–196; these read AVFVENMALAFFLGMCTFLAV, VSTAFGLGIAVTVVLGISVPA, FLNFITFIGVIAAIVQVLEMI, LGIFLPLITVNCAIFGGVSFM, IVYGFGSGIGWMLAIVALAGI, and LGITFITTGLMALGFMSFSGV.

The protein belongs to the NqrDE/RnfAE family. Composed of six subunits; NqrA, NqrB, NqrC, NqrD, NqrE and NqrF.

It localises to the cell inner membrane. The catalysed reaction is a ubiquinone + n Na(+)(in) + NADH + H(+) = a ubiquinol + n Na(+)(out) + NAD(+). Functionally, NQR complex catalyzes the reduction of ubiquinone-1 to ubiquinol by two successive reactions, coupled with the transport of Na(+) ions from the cytoplasm to the periplasm. NqrA to NqrE are probably involved in the second step, the conversion of ubisemiquinone to ubiquinol. This chain is Na(+)-translocating NADH-quinone reductase subunit E, found in Yersinia enterocolitica serotype O:8 / biotype 1B (strain NCTC 13174 / 8081).